Consider the following 157-residue polypeptide: Putative dehydration-responsive element-binding protein 2H (157 aa).

Positions 5–21 (RKSRGTRDVAEILRKWR) match the Nuclear localization signal motif. The tract at residues 29 to 57 (ADSCIDGGGSKPIRKAPPKRSRKGCMKGK) is disordered. Positions 40–54 (PIRKAPPKRSRKGCM) are enriched in basic residues. Residues 66 to 123 (DYTGVRQRTWGKWVAEIREPGRGAKLWLGTFSSSYEAALAYDEASKAIYGQSARLNLP) constitute a DNA-binding region (AP2/ERF).

The protein belongs to the AP2/ERF transcription factor family. ERF subfamily.

Its subcellular location is the nucleus. In terms of biological role, putative transcriptional activator that binds specifically to the DNA sequence 5'-[AG]CCGAC-3'. The chain is Putative dehydration-responsive element-binding protein 2H (DREB2H) from Arabidopsis thaliana (Mouse-ear cress).